Consider the following 130-residue polypeptide: Small ribosomal subunit protein uS11 (130 aa).

The protein belongs to the universal ribosomal protein uS11 family. Part of the 30S ribosomal subunit. Interacts with proteins S7 and S18. Binds to IF-3.

Its function is as follows. Located on the platform of the 30S subunit, it bridges several disparate RNA helices of the 16S rRNA. Forms part of the Shine-Dalgarno cleft in the 70S ribosome. This chain is Small ribosomal subunit protein uS11, found in Buchnera aphidicola subsp. Schizaphis graminum (strain Sg).